The chain runs to 337 residues: Glyceraldehyde-3-phosphate dehydrogenase 2 (337 aa).

NAD(+) contacts are provided by residues 11–12, Asp35, Arg79, and Thr121; that span reads RI. D-glyceraldehyde 3-phosphate-binding positions include 153-155, Thr184, Arg199, 212-213, and Arg235; these read SCT and TG. Catalysis depends on Cys154, which acts as the Nucleophile. Asn317 is a binding site for NAD(+).

It belongs to the glyceraldehyde-3-phosphate dehydrogenase family. As to quaternary structure, homotetramer.

The protein localises to the cytoplasm. The catalysed reaction is D-glyceraldehyde 3-phosphate + phosphate + NADP(+) = (2R)-3-phospho-glyceroyl phosphate + NADPH + H(+). It catalyses the reaction D-glyceraldehyde 3-phosphate + phosphate + NAD(+) = (2R)-3-phospho-glyceroyl phosphate + NADH + H(+). Its pathway is carbohydrate degradation; glycolysis; pyruvate from D-glyceraldehyde 3-phosphate: step 1/5. Its function is as follows. Involved in photosynthetic carbon assimilation. Catalyzes the NAD(P)-dependent oxidative phosphorylation of glyceraldehyde 3-phosphate (G3P) to 1,3-bisphosphoglycerate (BPG). The first reaction step involves the formation of a hemiacetal intermediate between G3P and a cysteine residue, and this hemiacetal intermediate is then oxidized to a thioester, with concomitant reduction of NAD to NADH. The reduced NADH is then exchanged with the second NAD, and the thioester is attacked by a nucleophilic inorganic phosphate to produce BPG. It can use both NADP and NAD. This chain is Glyceraldehyde-3-phosphate dehydrogenase 2 (gap2), found in Synechocystis sp. (strain ATCC 27184 / PCC 6803 / Kazusa).